The sequence spans 60 residues: Temporin-CG2 (60 aa).

An N-terminal signal peptide occupies residues 1–22; that stretch reads MFTLKKPLLVLFFLATINLSLC. Residues 23-43 constitute a propeptide, removed in mature form; sequence EQERNAEEERRDDDERNVEVE.

In terms of tissue distribution, expressed by the skin glands.

The protein resides in the secreted. In terms of biological role, antimicrobial peptide active against a variety of Gram-positive bacterial strains but not against Gram-negative bacteria. Has weak antifungal activity against a slime mold isolate. Has weak hemolytic activity against human erythrocytes. In Amolops chunganensis (Chungan torrent frog), this protein is Temporin-CG2.